We begin with the raw amino-acid sequence, 123 residues long: UPF0738 protein BCE_1319 (123 aa).

This sequence belongs to the UPF0738 family.

This Bacillus cereus (strain ATCC 10987 / NRS 248) protein is UPF0738 protein BCE_1319.